We begin with the raw amino-acid sequence, 1434 residues long: MLNDILSRVARVGAMHAGNRPNPPDDRPQPCRGKPPTSPGKTIKHKSFLGALAGAVAGALVAAAVAAAAVFLVGVTGGLAVAAVGALAVFAAGDLISAVTNKVSAMVDSASPAFGPVASGSGNVFVEKQPVARATKDTVACTKHNSPQLIAQGSESVFVNDAPAARIDDKTVCGATVKEGASTVFFGSGQGTYLDIADEFSWWEKALLIAVEFLVPPSRGMLKGLGKLFIRGPKAVLRGSRAGAKWIAGRLADKSSCASKAFKASSGLTRAKAAVKAFLKDPVYIASGEVIESRTDIELGQTLPLAFERTYRSASVHIGLLGRGWHDSWSEVATVTRDGLNTHVVITLAQGYDIDFTFHQDVQAVYCPHYPEFTLHRRGDGFSLWHRDQQTWRDFSVVQGERRLLSAIHDSHDNRIELVRDPKGYLRQVRHSDGVTLLLVWQGEFLHQIQRIDGGQKTLLAEYRQDEQGRLVEANATQAYHLYYDYDAAHRLTRWHDNDQTWARYEYDAQGRCVYTTCADGFLTARFDYLPDRVVMTDGLGQCSEFGFNDLFLMSWEKSPLGHVTRYEYDDYGNLLREISPAGRVVEFTYLDDTGRVSTFTDASGHQWQYDYDAAQRLCGVTDPLGREWGWMYDAEGNPERLTGPDASEVRFTWNRYGLLTQVSDAAGEVQARLQYDHRQRLLSATDAESRTRQLRYDGQDRVVQWQRADGARFRLGYRRASWTLPEQLIRPDDKEEQRQYDRHNNLLSYVDGNGALWRQTFGPFDLLTARTDAEGRTWHYAYDKESQQLTTVIAPDGSHWQWWLDADGRVIRERDMTGTETHYDYDEDGLCIRVRNGEGDTRHFLYDARGLLLRETAPDDTLHYRYDAVGRLTEVSSSTAHVQLEYDLRDRMVREWHNGTLLTRQVDDAARTVTRTLTWDGDADDTINALAPLTSLFHYTRTGELRQVQLPDGADLTLTHDAAGRESHRTGGSGFVQQREYDVMGWLTREMSGAQHDGHLLATQTREYRYDGAGNLTGVRHNRDAEGYRLDATGRVQEILSGGAGKPVDTTARFLYTRTGLPQEAGRLTEWQAGRLVQHDDTHYQYDRAGRLIRKQVVQPGYRPQVWQYRWDSRNQLRVVDTPNGERWLYRYDPFGRRVGKRCDQKAEEIRYLWDGDQIAEIRHYRHGQLIQRRHWVYNGWELVVQQRQHTGGDWETDFVTSSQNGTPQALFTPDGTLRWQAPKATLWGQRQAEKSESPDPGLAFAGQLRDSESGLCYNRFRYYDPAGGCYVSPDPIGIAGGESNYGYVSNPMCWVDPFGLAKCPTLAHGANGEILSAKATVSKAELRTGSGTNQSSRDYARSLGNQTDDAGHILGNVLGGQGGKGNVFPQLPAINRGQYRDFEKVVKDYIGQHGSVDIEWAFKYGNGGTRPTEIYYDVYQNGQKVFGRIFNN.

The segment at 14–42 (AMHAGNRPNPPDDRPQPCRGKPPTSPGKT) is disordered. 2 helical membrane passes run 48-68 (FLGA…VAAA) and 70-90 (VFLV…LAVF). YD repeat units follow at residues 486 to 521 (YDAA…CADG), 592 to 628 (DDTG…LGRE), and 847 to 876 (YDAR…LTEV).

It belongs to the RHS/WapA nuclease family.

It localises to the membrane. Functionally, toxic component of a toxin-immunity protein module, which functions as a cellular contact-dependent growth inhibition (CDI) system. This protein may be a nuclease that is specifically inhibited by its cognate immunity protein RhsAI. Upon expression of the C-terminus (residues 1284-1434) in E.coli growth is inhibited, cells elongate, nucleoids condense and plasmid DNA is degraded; these effects are blocked specifically by cognate immunity protein RshIA. Cell contact is necessary for growth inhibition. The chain is Probable deoxyribonuclease RhsA (rhsA) from Dickeya dadantii (strain 3937) (Erwinia chrysanthemi (strain 3937)).